A 206-amino-acid chain; its full sequence is Small ribosomal subunit protein uS4A (206 aa).

The S4 RNA-binding domain maps to 98-164 (MRLDNVVYRL…EKFKTFAENP (67 aa)).

The protein belongs to the universal ribosomal protein uS4 family. As to quaternary structure, part of the 30S ribosomal subunit. Contacts protein S5. The interaction surface between S4 and S5 is involved in control of translational fidelity.

Functionally, one of the primary rRNA binding proteins, it binds directly to 16S rRNA where it nucleates assembly of the body of the 30S subunit. Its function is as follows. With S5 and S12 plays an important role in translational accuracy. The sequence is that of Small ribosomal subunit protein uS4A from Clostridium botulinum (strain ATCC 19397 / Type A).